Here is a 558-residue protein sequence, read N- to C-terminus: Membrane protein insertase YidC (558 aa).

5 helical membrane-spanning segments follow: residues 3-23, 364-384, 438-458, 477-497, and 508-528; these read IKRT…FDNW, FVGN…AVFF, LPVV…LASV, PYFI…KLNP, and MMFM…GLVL.

It belongs to the OXA1/ALB3/YidC family. Type 1 subfamily. In terms of assembly, interacts with the Sec translocase complex via SecD. Specifically interacts with transmembrane segments of nascent integral membrane proteins during membrane integration.

It is found in the cell inner membrane. Functionally, required for the insertion and/or proper folding and/or complex formation of integral membrane proteins into the membrane. Involved in integration of membrane proteins that insert both dependently and independently of the Sec translocase complex, as well as at least some lipoproteins. Aids folding of multispanning membrane proteins. This Burkholderia mallei (strain NCTC 10247) protein is Membrane protein insertase YidC.